Consider the following 150-residue polypeptide: Ribosome maturation factor RimP (150 aa).

The protein belongs to the RimP family.

The protein resides in the cytoplasm. Its function is as follows. Required for maturation of 30S ribosomal subunits. The protein is Ribosome maturation factor RimP of Escherichia coli O9:H4 (strain HS).